The following is a 224-amino-acid chain: C-&gt;U-editing enzyme APOBEC-2 (224 aa).

Residues 1–23 (MAQKEEAAEAAAPASQNGDDLEN) are disordered. Positions 60 and 98 each coordinate Zn(2+). Residues 64–169 (GRNKTFLCYV…PEVQAALKKL (106 aa)) enclose the CMP/dCMP-type deaminase domain. The active-site Proton donor is E100. Positions 128 and 131 each coordinate Zn(2+).

Belongs to the cytidine and deoxycytidylate deaminase family. Homotetramer. The cofactor is Zn(2+). In terms of tissue distribution, expressed exclusively in heart and skeletal muscle.

It carries out the reaction cytidine(6666) in apoB mRNA + H2O + H(+) = uridine(6666) in apoB mRNA + NH4(+). Probable C to U editing enzyme whose physiological substrate is not yet known. Does not display detectable apoB mRNA editing. Has a low intrinsic cytidine deaminase activity. May play a role in the epigenetic regulation of gene expression through the process of active DNA demethylation. The sequence is that of C-&gt;U-editing enzyme APOBEC-2 (Apobec2) from Mus musculus (Mouse).